The chain runs to 651 residues: Protein transport protein SEC9 (651 aa).

3 disordered regions span residues 1–22 (MGLKKFFKIKPPEEATPEQNKD), 53–299 (AEDK…QAPM), and 313–332 (RNSEVDLNEEPRTGEFDFEE). Phosphoserine is present on residues Ser-79 and Ser-92. A compositionally biased stretch (polar residues) spans 86 to 112 (NEATAGSNRGSSGTQDLGNGAESNSMQ). A compositionally biased stretch (basic and acidic residues) spans 120-129 (DDYRYDDDPY). Polar residues-rich tracts occupy residues 157 to 218 (GTSL…SLDQ) and 244 to 284 (DSNT…ANPY). Phosphoserine occurs at positions 186, 190, 213, 271, and 273. A compositionally biased stretch (low complexity) spans 285 to 296 (SSRSVRQPQSQQ). Residues 313-327 (RNSEVDLNEEPRTGE) show a composition bias toward basic and acidic residues. Ser-315 bears the Phosphoserine mark. At Thr-355 the chain carries Phosphothreonine. Ser-359 bears the Phosphoserine mark. T-SNARE coiled-coil homology domains are found at residues 434-496 (KFTK…VAEL) and 588-650 (DEME…LAGI).

Belongs to the SNAP-25 family. In terms of assembly, interacts with SRO7 and SRO77.

Component of a SNARE complex that may be the effector of SEC4 function in exocytosis. This Saccharomyces cerevisiae (strain ATCC 204508 / S288c) (Baker's yeast) protein is Protein transport protein SEC9 (SEC9).